The following is a 1296-amino-acid chain: Phosphoribosylformylglycinamidine synthase (1296 aa).

The disordered stretch occupies residues 304 to 323; the sequence is WPGAATGSGGEIRDEGATGR. ATP-binding positions include 306–317 and Ala677; that span reads GAATGSGGEIRD. 4 residues coordinate Mg(2+): Asp678, Glu717, Asn721, and Asp885. Ser887 provides a ligand contact to ATP. The segment covering 1000-1013 has biased composition (basic and acidic residues); it reads PDCADQEHQAKQDE. Residues 1000 to 1019 form a disordered region; it reads PDCADQEHQAKQDESDPGLN. In terms of domain architecture, Glutamine amidotransferase type-1 spans 1043 to 1296; sequence VAVLREQGVN…MFRNARKQLG (254 aa). The Nucleophile role is filled by Cys1136. Catalysis depends on residues His1261 and Glu1263.

It in the N-terminal section; belongs to the FGAMS family. As to quaternary structure, monomer.

The protein resides in the cytoplasm. It catalyses the reaction N(2)-formyl-N(1)-(5-phospho-beta-D-ribosyl)glycinamide + L-glutamine + ATP + H2O = 2-formamido-N(1)-(5-O-phospho-beta-D-ribosyl)acetamidine + L-glutamate + ADP + phosphate + H(+). Its pathway is purine metabolism; IMP biosynthesis via de novo pathway; 5-amino-1-(5-phospho-D-ribosyl)imidazole from N(2)-formyl-N(1)-(5-phospho-D-ribosyl)glycinamide: step 1/2. Phosphoribosylformylglycinamidine synthase involved in the purines biosynthetic pathway. Catalyzes the ATP-dependent conversion of formylglycinamide ribonucleotide (FGAR) and glutamine to yield formylglycinamidine ribonucleotide (FGAM) and glutamate. This chain is Phosphoribosylformylglycinamidine synthase, found in Yersinia pestis bv. Antiqua (strain Antiqua).